A 436-amino-acid polypeptide reads, in one-letter code: Chorion-specific transcription factor GCMa (436 aa).

The GCM DNA-binding region spans 14-169 (LSWDINDMKL…KLEAEARRAM (156 aa)). Zn(2+) contacts are provided by cysteine 76, cysteine 82, cysteine 86, cysteine 113, cysteine 116, cysteine 125, histidine 152, and histidine 154.

In terms of processing, polyubiquitinated in the presence of UBE2D2 and FBXW2 (in vitro).

It localises to the nucleus. Functionally, transcription factor involved in the control of expression of placental growth factor (PGF) and other placenta-specific genes. Binds to the trophoblast-specific element 2 (TSE2) of the aromatase gene enhancer. Binds to the SYDE1 promoter. Has a central role in mediating the differentiation of trophoblast cells along both the villous and extravillous pathways in placental development. The sequence is that of Chorion-specific transcription factor GCMa (Gcm1) from Rattus norvegicus (Rat).